Here is a 316-residue protein sequence, read N- to C-terminus: Probable cell division protein WhiA (316 aa).

The segment at residues 274–308 is a DNA-binding region (H-T-H motif); that stretch reads SLKELGEMVSTGVISKSGVNHRLRKIDEIAEKLRN.

This sequence belongs to the WhiA family.

Functionally, involved in cell division and chromosome segregation. This chain is Probable cell division protein WhiA, found in Macrococcus caseolyticus (strain JCSC5402) (Macrococcoides caseolyticum).